The following is a 209-amino-acid chain: Small ribosomal subunit protein uS3 (209 aa).

One can recognise a KH type-2 domain in the interval 38–107 (IRKIIKNKYY…RVVINIEEIK (70 aa)).

This sequence belongs to the universal ribosomal protein uS3 family. Part of the 30S ribosomal subunit. Forms a tight complex with proteins S10 and S14.

Binds the lower part of the 30S subunit head. Binds mRNA in the 70S ribosome, positioning it for translation. The protein is Small ribosomal subunit protein uS3 of Thermotoga maritima (strain ATCC 43589 / DSM 3109 / JCM 10099 / NBRC 100826 / MSB8).